Consider the following 177-residue polypeptide: ATP-dependent protease subunit HslV (177 aa).

The active site involves Thr-4. Na(+) is bound by residues Ser-159, Cys-162, and Thr-165.

Belongs to the peptidase T1B family. HslV subfamily. A double ring-shaped homohexamer of HslV is capped on each side by a ring-shaped HslU homohexamer. The assembly of the HslU/HslV complex is dependent on binding of ATP.

The protein localises to the cytoplasm. The catalysed reaction is ATP-dependent cleavage of peptide bonds with broad specificity.. Its activity is regulated as follows. Allosterically activated by HslU binding. Its function is as follows. Protease subunit of a proteasome-like degradation complex believed to be a general protein degrading machinery. The chain is ATP-dependent protease subunit HslV from Mesorhizobium japonicum (strain LMG 29417 / CECT 9101 / MAFF 303099) (Mesorhizobium loti (strain MAFF 303099)).